Reading from the N-terminus, the 235-residue chain is Small heat shock protein, chloroplastic (235 aa).

2 disordered regions span residues 1 to 23 (MAYT…TSKI) and 51 to 80 (TGDN…ERRP). The segment covering 52–63 (GDNKDTSVDVHH) has biased composition (basic and acidic residues). Over residues 64–74 (SSAQGGNNQGT) the composition is skewed to polar residues. The region spanning 126-235 (SGTGEIRTPW…EKKVIDVQIN (110 aa)) is the sHSP domain.

This sequence belongs to the small heat shock protein (HSP20) family. In fruits, flowers, leaves, and stems.

The protein resides in the plastid. It is found in the chloroplast. This is Small heat shock protein, chloroplastic (HSP21) from Solanum lycopersicum (Tomato).